The sequence spans 139 residues: FAD synthase (139 aa).

Residues 9–10 (TF), 14–17 (HPGH), and Asn92 contribute to the ATP site.

This sequence belongs to the archaeal FAD synthase family. As to quaternary structure, homodimer. A divalent metal cation serves as cofactor.

The catalysed reaction is FMN + ATP + H(+) = FAD + diphosphate. It participates in cofactor biosynthesis; FAD biosynthesis; FAD from FMN: step 1/1. Catalyzes the transfer of the AMP portion of ATP to flavin mononucleotide (FMN) to produce flavin adenine dinucleotide (FAD) coenzyme. In Methanocella paludicola (strain DSM 17711 / JCM 13418 / NBRC 101707 / SANAE), this protein is FAD synthase.